An 89-amino-acid polypeptide reads, in one-letter code: DNA/RNA-binding protein Alba (89 aa).

Belongs to the histone-like Alba family.

It localises to the cytoplasm. The protein resides in the chromosome. Functionally, binds double-stranded DNA tightly but without sequence specificity. Involved in DNA compaction. The sequence is that of DNA/RNA-binding protein Alba from Methanococcus maripaludis (strain DSM 14266 / JCM 13030 / NBRC 101832 / S2 / LL).